We begin with the raw amino-acid sequence, 470 residues long: ATP synthase subunit beta (470 aa).

155–162 is an ATP binding site; the sequence is GGAGVGKT.

This sequence belongs to the ATPase alpha/beta chains family. As to quaternary structure, F-type ATPases have 2 components, CF(1) - the catalytic core - and CF(0) - the membrane proton channel. CF(1) has five subunits: alpha(3), beta(3), gamma(1), delta(1), epsilon(1). CF(0) has three main subunits: a(1), b(2) and c(9-12). The alpha and beta chains form an alternating ring which encloses part of the gamma chain. CF(1) is attached to CF(0) by a central stalk formed by the gamma and epsilon chains, while a peripheral stalk is formed by the delta and b chains.

The protein localises to the cell membrane. The catalysed reaction is ATP + H2O + 4 H(+)(in) = ADP + phosphate + 5 H(+)(out). Produces ATP from ADP in the presence of a proton gradient across the membrane. The catalytic sites are hosted primarily by the beta subunits. The polypeptide is ATP synthase subunit beta (Staphylococcus aureus (strain MW2)).